The chain runs to 281 residues: Bifunctional protein FolD (281 aa).

NADP(+) is bound by residues 165–167 (GRG), threonine 192, and valine 233.

The protein belongs to the tetrahydrofolate dehydrogenase/cyclohydrolase family. Homodimer.

The enzyme catalyses (6R)-5,10-methylene-5,6,7,8-tetrahydrofolate + NADP(+) = (6R)-5,10-methenyltetrahydrofolate + NADPH. It catalyses the reaction (6R)-5,10-methenyltetrahydrofolate + H2O = (6R)-10-formyltetrahydrofolate + H(+). It participates in one-carbon metabolism; tetrahydrofolate interconversion. Catalyzes the oxidation of 5,10-methylenetetrahydrofolate to 5,10-methenyltetrahydrofolate and then the hydrolysis of 5,10-methenyltetrahydrofolate to 10-formyltetrahydrofolate. The polypeptide is Bifunctional protein FolD (Corynebacterium diphtheriae (strain ATCC 700971 / NCTC 13129 / Biotype gravis)).